Reading from the N-terminus, the 602-residue chain is Elongation factor 4 (602 aa).

A tr-type G domain is found at 7–196 (SKIRNFCIIA…HPQNEIKSPT (190 aa)). GTP contacts are provided by residues 19 to 24 (DHGKST) and 136 to 139 (NKVD).

This sequence belongs to the TRAFAC class translation factor GTPase superfamily. Classic translation factor GTPase family. LepA subfamily.

The protein resides in the cell inner membrane. The catalysed reaction is GTP + H2O = GDP + phosphate + H(+). In terms of biological role, required for accurate and efficient protein synthesis under certain stress conditions. May act as a fidelity factor of the translation reaction, by catalyzing a one-codon backward translocation of tRNAs on improperly translocated ribosomes. Back-translocation proceeds from a post-translocation (POST) complex to a pre-translocation (PRE) complex, thus giving elongation factor G a second chance to translocate the tRNAs correctly. Binds to ribosomes in a GTP-dependent manner. This is Elongation factor 4 from Prochlorococcus marinus (strain MIT 9515).